The chain runs to 386 residues: Patatin group M-2 (386 aa).

Residues 1–23 (MATTKSFLILFFMILATTSSTCA) form the signal peptide. In terms of domain architecture, PNPLA spans 32-229 (LSIDGGGIKG…TVGDPALLSL (198 aa)). Residues 36–41 (GGGIKG) carry the GXGXXG motif. The short motif at 75 to 79 (GTSTG) is the GXSXG element. Catalysis depends on Ser-77, which acts as the Nucleophile. The N-linked (GlcNAc...) asparagine glycan is linked to Asn-115. Asp-215 functions as the Proton acceptor in the catalytic mechanism. A DGA/G motif is present at residues 215 to 217 (DGG). Residues 321–384 (ENALTGTTTE…DRKKLRANKA (64 aa)) are a coiled coil.

The protein belongs to the patatin family. Tuber.

Its subcellular location is the vacuole. Functionally, probable lipolytic acyl hydrolase (LAH), an activity which is thought to be involved in the response of tubers to pathogens. In Solanum tuberosum (Potato), this protein is Patatin group M-2.